Consider the following 103-residue polypeptide: Large ribosomal subunit protein bL21 (103 aa).

The protein belongs to the bacterial ribosomal protein bL21 family. In terms of assembly, part of the 50S ribosomal subunit. Contacts protein L20.

Its function is as follows. This protein binds to 23S rRNA in the presence of protein L20. This is Large ribosomal subunit protein bL21 from Clostridium perfringens (strain ATCC 13124 / DSM 756 / JCM 1290 / NCIMB 6125 / NCTC 8237 / Type A).